A 393-amino-acid chain; its full sequence is NAD(P)H-quinone oxidoreductase subunit H, chloroplastic (393 aa).

It belongs to the complex I 49 kDa subunit family. As to quaternary structure, NDH is composed of at least 16 different subunits, 5 of which are encoded in the nucleus.

The protein localises to the plastid. It localises to the chloroplast thylakoid membrane. The catalysed reaction is a plastoquinone + NADH + (n+1) H(+)(in) = a plastoquinol + NAD(+) + n H(+)(out). It catalyses the reaction a plastoquinone + NADPH + (n+1) H(+)(in) = a plastoquinol + NADP(+) + n H(+)(out). Functionally, NDH shuttles electrons from NAD(P)H:plastoquinone, via FMN and iron-sulfur (Fe-S) centers, to quinones in the photosynthetic chain and possibly in a chloroplast respiratory chain. The immediate electron acceptor for the enzyme in this species is believed to be plastoquinone. Couples the redox reaction to proton translocation, and thus conserves the redox energy in a proton gradient. The polypeptide is NAD(P)H-quinone oxidoreductase subunit H, chloroplastic (Saccharum hybrid (Sugarcane)).